The chain runs to 301 residues: Tail tube protein (301 aa).

This sequence belongs to the skunalikevirus tail tube protein family. Homohexamer. Interacts with the tail terminator protein.

The protein localises to the virion. Forms the cylindrical rigid tail tube with a 4 nm wide central channel for DNA ejection. The tube is composed of 31 hexameric rings. This Lactococcus phage SK1 (Lactococcus lactis bacteriophage SK1) protein is Tail tube protein.